The sequence spans 255 residues: uncharacterized protein (255 aa).

The signal sequence occupies residues 1–23; the sequence is MKRLNKLVLGIIFLFLVISITAG. Cysteine 24 carries the N-palmitoyl cysteine lipid modification. Cysteine 24 carries S-diacylglycerol cysteine lipidation.

This sequence belongs to the staphylococcal tandem lipoprotein family.

It localises to the cell membrane. This is an uncharacterized protein from Staphylococcus aureus (strain USA300).